The chain runs to 119 residues: Large ribosomal subunit protein uL18 (119 aa).

The interval 1–20 (MISKPDKNKTRQKRHTRVRG) is disordered. Residues 10 to 20 (TRQKRHTRVRG) are compositionally biased toward basic residues.

This sequence belongs to the universal ribosomal protein uL18 family. Part of the 50S ribosomal subunit; part of the 5S rRNA/L5/L18/L25 subcomplex. Contacts the 5S and 23S rRNAs.

Functionally, this is one of the proteins that bind and probably mediate the attachment of the 5S RNA into the large ribosomal subunit, where it forms part of the central protuberance. The chain is Large ribosomal subunit protein uL18 from Latilactobacillus sakei subsp. sakei (strain 23K) (Lactobacillus sakei subsp. sakei).